The primary structure comprises 160 residues: Transcriptional repressor NrdR (160 aa).

Residues 3-34 (CPFCRHADTQVVDSRVSEDGATIRRRRRCPAC) fold into a zinc finger. The ATP-cone domain maps to 49–139 (PSVVKKDGSR…VYRRFEDVSE (91 aa)).

Belongs to the NrdR family. It depends on Zn(2+) as a cofactor.

Negatively regulates transcription of bacterial ribonucleotide reductase nrd genes and operons by binding to NrdR-boxes. In Paraburkholderia phytofirmans (strain DSM 17436 / LMG 22146 / PsJN) (Burkholderia phytofirmans), this protein is Transcriptional repressor NrdR.